We begin with the raw amino-acid sequence, 109 residues long: Nucleoid-associated protein VV1_2004 (109 aa).

It belongs to the YbaB/EbfC family. In terms of assembly, homodimer.

It is found in the cytoplasm. It localises to the nucleoid. Functionally, binds to DNA and alters its conformation. May be involved in regulation of gene expression, nucleoid organization and DNA protection. In Vibrio vulnificus (strain CMCP6), this protein is Nucleoid-associated protein VV1_2004.